A 582-amino-acid polypeptide reads, in one-letter code: External alternative NAD(P)H-ubiquinone oxidoreductase B2, mitochondrial (582 aa).

The transit peptide at 1–38 (MRNFSVFERFSKAFKDHPSLTRILVVSTISGGGLIAYS) directs the protein to the mitochondrion. Position 60 to 90 (60 to 90 (KVVLLGTGWAGTSFLKNLNNSQYEVQIISPR)) interacts with FAD. Position 223–259 (223–259 (LHFVVVGGGPTGVEFAAELHDFVTEDLVSLYPRAKGS)) interacts with NAD(+). The region spanning 379–414 (KVMEDVSAIFSKADKDKSGTLTLKEFQEAMDDICVR) is the EF-hand domain. Residues D392, D394, S396, T398, and E403 each contribute to the Ca(2+) site. The Microbody targeting signal motif lies at 573–582 (FIFGRDSSSI).

It belongs to the NADH dehydrogenase family. FAD is required as a cofactor. As to expression, mostly expressed in seedlings and roots and, to a lower extent, in cotyledons, leaves, stems, buds and flowers.

Its subcellular location is the mitochondrion inner membrane. The protein resides in the peroxisome. It carries out the reaction a quinone + NADH + H(+) = a quinol + NAD(+). It catalyses the reaction a ubiquinone + NADH + H(+) = a ubiquinol + NAD(+). With respect to regulation, NADPH oxidase activity is stimulated by calcium ions. In terms of biological role, alternative NADH-ubiquinone oxidoreductase which catalyzes the oxidation of mitochondrial NADH does not translocate protons across the inner mitochondrial membrane. Calcium-dependent NAD(P)H dehydrogenase; more efficient on NADH. Binds calcium ions. This chain is External alternative NAD(P)H-ubiquinone oxidoreductase B2, mitochondrial (NDB2), found in Arabidopsis thaliana (Mouse-ear cress).